The following is a 474-amino-acid chain: MAYIQLEPLNEGFLSRISDVLLCGWTCQHCCQRCYESSCCQSSEDEVEILGPFPAQTPPWLMASRSNDKDGDSVHTASDVPLTPRTNSPDGRRSSSDTSKSTYSLTRRISSLDSRRPSSPLIDIKPIEFGVLSAKKEPIQPSVLRRTYTPDDYFRKFEPRLYSLDSNLDDVDSLTDEEIMSKYQLGMLHFSTQYDLLHNHLTVRVIEARDLPPPISHDGSRQDMAHSNPYVKICLLPDQKNSKQTGVKRKTQKPVFEERYTFEIPFLEAQRRTLLLTVVDFDKFSRHCVIGKVAVPLCEVDLVKGGHWWKALIPSSQNEVELGELLLSLNYLPSAGRLNVDIIRAKQLLQTDVSQGSDPFVKIQLVHGLKLVKTKKTSFLRGTIDPFYNESFSFKVPQEELENASLVFTVFGHNMKSSNDFIGRIVIGQYSSGPSESNHWRRMLNTHRTAVEQWHSLRSRAECDRVSPASLEVT.

A disordered region spans residues 60–117 (WLMASRSNDKDGDSVHTASDVPLTPRTNSPDGRRSSSDTSKSTYSLTRRISSLDSRRP). Low complexity predominate over residues 96 to 117 (SDTSKSTYSLTRRISSLDSRRP). Phosphoserine occurs at positions 118 and 119. C2 domains are found at residues 184-310 (QLGM…HWWK) and 321-455 (ELGE…EQWH).

The protein belongs to the synaptotagmin family. Expressed in brain and kidney.

Its subcellular location is the membrane. Plays a role in dendrite formation by melanocytes. The sequence is that of Synaptotagmin-17 (Syt17) from Rattus norvegicus (Rat).